A 304-amino-acid polypeptide reads, in one-letter code: Nucleotide-binding protein SH2124 (304 aa).

19-26 (GLSGAGKS) lines the ATP pocket. 70–73 (DLRG) is a binding site for GTP.

Belongs to the RapZ-like family.

In terms of biological role, displays ATPase and GTPase activities. This Staphylococcus haemolyticus (strain JCSC1435) protein is Nucleotide-binding protein SH2124.